Here is a 447-residue protein sequence, read N- to C-terminus: uncharacterized protein (447 aa).

The interval 392–435 (RFTKPSSSVAKSTSPSLRNSGSDESDLNQSDSDKEDERVVPVPK) is disordered. Low complexity predominate over residues 395-407 (KPSSSVAKSTSPS). The span at 408-421 (LRNSGSDESDLNQS) shows a compositional bias: polar residues.

This is an uncharacterized protein from Invertebrate iridescent virus 3 (IIV-3).